The primary structure comprises 218 residues: Lipoprotein-releasing system ATP-binding protein LolD (218 aa).

The ABC transporter domain maps to isoleucine 2–aspartate 218. Residue glycine 34–threonine 41 participates in ATP binding.

Belongs to the ABC transporter superfamily. Lipoprotein translocase (TC 3.A.1.125) family. In terms of assembly, the complex is composed of two ATP-binding proteins (LolD) and two transmembrane proteins (LolC and LolE).

It localises to the cell inner membrane. Its function is as follows. Part of the ABC transporter complex LolCDE involved in the translocation of mature outer membrane-directed lipoproteins, from the inner membrane to the periplasmic chaperone, LolA. Responsible for the formation of the LolA-lipoprotein complex in an ATP-dependent manner. The polypeptide is Lipoprotein-releasing system ATP-binding protein LolD (Bacteroides thetaiotaomicron (strain ATCC 29148 / DSM 2079 / JCM 5827 / CCUG 10774 / NCTC 10582 / VPI-5482 / E50)).